The following is a 260-amino-acid chain: MADS-box transcription factor 29 (260 aa).

One can recognise an MADS-box domain in the interval Met1–Thr61. The K-box domain maps to Asp85–Gln175.

Expressed in developing seeds.

It is found in the nucleus. Probable transcription factor. The protein is MADS-box transcription factor 29 (MADS29) of Oryza sativa subsp. japonica (Rice).